The primary structure comprises 266 residues: UPF0354 protein lmo1608 (266 aa).

The protein belongs to the UPF0354 family.

In Listeria monocytogenes serovar 1/2a (strain ATCC BAA-679 / EGD-e), this protein is UPF0354 protein lmo1608.